The following is a 285-amino-acid chain: SLAM family member 8 (285 aa).

The N-terminal stretch at 1–22 is a signal peptide; that stretch reads MVMRPLWSLLLWEALLPITVTG. Topologically, residues 23-233 are extracellular; that stretch reads AQVLSKVGGS…AAPGKASYKD (211 aa). Asn-85 carries an N-linked (GlcNAc...) asparagine glycan. The region spanning 128–215 is the Ig-like C2-type domain; the sequence is PVVQVFIAVE…PVSWDLATVT (88 aa). Cys-152 and Cys-201 are oxidised to a cystine. A helical transmembrane segment spans residues 234–254; it reads VLLVVVPVSLLLMLVTLFSAW. Residues 255 to 285 are Cytoplasmic-facing; the sequence is HWCPCSGKKKKDVHADRVGPETENPLVQDLP. Residues 262-285 form a disordered region; sequence KKKKDVHADRVGPETENPLVQDLP.

Expressed in lymph node, spleen, thymus and bone marrow.

The protein resides in the membrane. Functionally, may play a role in B-lineage commitment and/or modulation of signaling through the B-cell receptor. This Homo sapiens (Human) protein is SLAM family member 8 (SLAMF8).